We begin with the raw amino-acid sequence, 129 residues long: uncharacterized protein (129 aa).

The interval 44–63 (PYRAADRSNDQDNDRSGGNV) is disordered. A compositionally biased stretch (basic and acidic residues) spans 46 to 58 (RAADRSNDQDNDR). A run of 2 helical transmembrane segments spans residues 78–98 (IISL…VGYI) and 109–129 (AWAM…IPFF).

The protein localises to the cell membrane. This is an uncharacterized protein from Bacillus subtilis (strain 168).